Here is a 355-residue protein sequence, read N- to C-terminus: Methylthioribose-1-phosphate isomerase (355 aa).

Substrate is bound by residues 47 to 49 (RGA), arginine 90, and glutamine 197. Catalysis depends on aspartate 238, which acts as the Proton donor. 248–249 (NK) is a substrate binding site.

It belongs to the eIF-2B alpha/beta/delta subunits family. MtnA subfamily.

The enzyme catalyses 5-(methylsulfanyl)-alpha-D-ribose 1-phosphate = 5-(methylsulfanyl)-D-ribulose 1-phosphate. It functions in the pathway amino-acid biosynthesis; L-methionine biosynthesis via salvage pathway; L-methionine from S-methyl-5-thio-alpha-D-ribose 1-phosphate: step 1/6. Functionally, catalyzes the interconversion of methylthioribose-1-phosphate (MTR-1-P) into methylthioribulose-1-phosphate (MTRu-1-P). This Herpetosiphon aurantiacus (strain ATCC 23779 / DSM 785 / 114-95) protein is Methylthioribose-1-phosphate isomerase.